Reading from the N-terminus, the 56-residue chain is Large ribosomal subunit protein bL32 (56 aa).

Over residues 1-16 (MAVQKSKKSRSMRGMR) the composition is skewed to basic residues. The disordered stretch occupies residues 1-33 (MAVQKSKKSRSMRGMRRSHDALTTSAVSVDATS). The segment covering 21-33 (ALTTSAVSVDATS) has biased composition (polar residues).

It belongs to the bacterial ribosomal protein bL32 family.

The polypeptide is Large ribosomal subunit protein bL32 (Aliivibrio fischeri (strain ATCC 700601 / ES114) (Vibrio fischeri)).